A 112-amino-acid polypeptide reads, in one-letter code: Integration host factor subunit alpha (112 aa).

This sequence belongs to the bacterial histone-like protein family. Heterodimer of an alpha and a beta chain.

This protein is one of the two subunits of integration host factor, a specific DNA-binding protein that functions in genetic recombination as well as in transcriptional and translational control. This Rhizobium etli (strain ATCC 51251 / DSM 11541 / JCM 21823 / NBRC 15573 / CFN 42) protein is Integration host factor subunit alpha.